The sequence spans 199 residues: Inosine triphosphate pyrophosphatase (199 aa).

Residue 12-17 (TGNAKK) coordinates ITP. Glutamate 42 contacts Mg(2+). ITP is bound by residues lysine 54, 70 to 71 (DT), lysine 87, 146 to 149 (FGWD), lysine 169, and 174 to 175 (HR).

The protein belongs to the HAM1 NTPase family. Homodimer. Mg(2+) serves as cofactor. Mn(2+) is required as a cofactor.

The protein localises to the cytoplasm. The enzyme catalyses ITP + H2O = IMP + diphosphate + H(+). The catalysed reaction is dITP + H2O = dIMP + diphosphate + H(+). It catalyses the reaction XTP + H2O = XMP + diphosphate + H(+). Pyrophosphatase that hydrolyzes non-canonical purine nucleotides such as inosine triphosphate (ITP), deoxyinosine triphosphate (dITP) or xanthosine 5'-triphosphate (XTP) to their respective monophosphate derivatives. The enzyme does not distinguish between the deoxy- and ribose forms. Probably excludes non-canonical purines from RNA and DNA precursor pools, thus preventing their incorporation into RNA and DNA and avoiding chromosomal lesions. The protein is Inosine triphosphate pyrophosphatase of Monosiga brevicollis (Choanoflagellate).